The following is a 628-amino-acid chain: Monoterpene synthase like 1, chloroplastic (628 aa).

Mg(2+) is bound by residues Asp-379, Asp-383, and Asp-531. The DDXXD motif motif lies at 379–383; it reads DDIYD.

It belongs to the terpene synthase family. Tpsd subfamily. Mg(2+) serves as cofactor. The cofactor is Mn(2+).

Its subcellular location is the plastid. It localises to the chloroplast. Its pathway is terpene metabolism; oleoresin biosynthesis. It participates in secondary metabolite biosynthesis; terpenoid biosynthesis. Its function is as follows. Monoterpene synthase (TPS) involved in the biosynthesis of monoterpene natural products included in conifer oleoresin secretions and volatile emissions; these compounds contribute to biotic and abiotic stress defense against herbivores and pathogens. The chain is Monoterpene synthase like 1, chloroplastic from Pinus banksiana (Jack pine).